Consider the following 116-residue polypeptide: Iron-sulfur cluster assembly protein CyaY (116 aa).

It belongs to the frataxin family.

Involved in iron-sulfur (Fe-S) cluster assembly. May act as a regulator of Fe-S biogenesis. The chain is Iron-sulfur cluster assembly protein CyaY from Buchnera aphidicola subsp. Acyrthosiphon pisum (strain APS) (Acyrthosiphon pisum symbiotic bacterium).